We begin with the raw amino-acid sequence, 335 residues long: Ornithine carbamoyltransferase (335 aa).

Carbamoyl phosphate is bound by residues 56–59 (STRT), glutamine 83, arginine 107, and 134–137 (HPTQ). L-ornithine is bound by residues asparagine 168, aspartate 232, and 236–237 (SM). Carbamoyl phosphate-binding positions include 274–275 (CL) and arginine 320.

It belongs to the aspartate/ornithine carbamoyltransferase superfamily. OTCase family.

The protein localises to the cytoplasm. It carries out the reaction carbamoyl phosphate + L-ornithine = L-citrulline + phosphate + H(+). It functions in the pathway amino-acid biosynthesis; L-arginine biosynthesis; L-arginine from L-ornithine and carbamoyl phosphate: step 1/3. Its function is as follows. Reversibly catalyzes the transfer of the carbamoyl group from carbamoyl phosphate (CP) to the N(epsilon) atom of ornithine (ORN) to produce L-citrulline. This chain is Ornithine carbamoyltransferase, found in Yersinia pestis bv. Antiqua (strain Nepal516).